We begin with the raw amino-acid sequence, 747 residues long: Pyrin (747 aa).

Residues 1-92 form the Pyrin domain; that stretch reads MANTRVDHLL…AEELHKATGP (92 aa). The segment at 89 to 181 is disordered; it reads ATGPEHLTEE…GARSAAPLYR (93 aa). The segment covering 122–135 has biased composition (acidic residues); sequence PGEDEAQQNDDESD. Positions 442, 445, 465, and 471 each coordinate Zn(2+). The B box-type zinc-finger motif lies at 442-479; that stretch reads CPRHMKQVQLLFCEDHREPICLICRLSQEHQGHRVRPI. A coiled-coil region spans residues 479–508; it reads IEEAALQYKEQIRKQLERLREMRGYVEEHK. The tract at residues 487-645 is required for homotrimerization and induction of pyroptosomes; it reads KEQIRKQLER…RFSEMLGSEM (159 aa). A disordered region spans residues 698 to 720; it reads EPQDYLHPSSAQDTPELHEIHSQ.

In terms of assembly, homotrimer. Interacts (via the B box-type zinc finger) with PSTPIP1. Interacts (via the B30.2/SPRY domain) with several components of the inflammasome complex, including CASP1 p20 and p10 subunits, CASP5, PYCARD, NLRP1, NLRP2 and NLRP3, as well as with unprocessed IL1B; this interaction may lead to autophagic degradation of these proteins. Component of the AIM2 PANoptosome complex, a multiprotein complex that drives inflammatory cell death (PANoptosis). Interacts with NFKBIA and RELA. Interacts weakly with VASP and ACTR3. Interacts with active ULK1 (phosphorylated on 'Ser-317') and BECN1 simultaneously. Also interacts with ATG16L1 (via WD repeats), and with ATG8 family members, including GABARAP, GABARAPL1 and, to a lesser extent, GABARAPL2, MAP1LC3A/LC3A and MAP1LC3C/LC3C. Interacts with TRIM21. Interacts with YWHAB, YWHAE, YWHAG, YWHAH, YWHAQ and YWHAZ; the interaction is required for the down-regulation of pyrin pro-inflammatory activity. Degraded along with the delivery of its substrates to autolysosomal compartments (at protein level). In terms of tissue distribution, expressed in spleen and, to a lesser degree in the lung. Not expressed in thymus, testis, ovary, heart, brain, liver, kidney and muscle.

It is found in the cytoplasm. The protein localises to the cytoskeleton. It localises to the cell projection. Its subcellular location is the ruffle. The protein resides in the lamellipodium. It is found in the cytoplasmic vesicle. The protein localises to the autophagosome. It localises to the nucleus. Functionally, involved in the regulation of innate immunity and the inflammatory response in response to IFNG/IFN-gamma. Organizes autophagic machinery by serving as a platform for the assembly of ULK1, Beclin 1/BECN1, ATG16L1, and ATG8 family members and recognizes specific autophagy targets, thus coordinating target recognition with assembly of the autophagic apparatus and initiation of autophagy. Acts as an autophagy receptor for the degradation of several inflammasome components, including CASP1, NLRP1 and NLRP3, hence preventing excessive IL1B- and IL18-mediated inflammation. However, it can also have a positive effect in the inflammatory pathway, acting as an innate immune sensor that triggers PYCARD/ASC specks formation, caspase-1 activation, and IL1B and IL18 production. Together with AIM2, also acts as a mediator of pyroptosis, necroptosis and apoptosis (PANoptosis), an integral part of host defense against pathogens, in response to bacterial infection. It is required for PSTPIP1-induced PYCARD/ASC oligomerization and inflammasome formation. Recruits PSTPIP1 to inflammasomes, and is required for PSTPIP1 oligomerization. This chain is Pyrin, found in Rattus norvegicus (Rat).